The sequence spans 701 residues: Elongation factor G 1 (701 aa).

The tr-type G domain maps to 8 to 290 (ERYRNIGISA…AVIDYLPSPL (283 aa)). Residues 17–24 (AHIDAGKT), 88–92 (DTPGH), and 142–145 (NKMD) each bind GTP.

It belongs to the TRAFAC class translation factor GTPase superfamily. Classic translation factor GTPase family. EF-G/EF-2 subfamily.

It is found in the cytoplasm. Its function is as follows. Catalyzes the GTP-dependent ribosomal translocation step during translation elongation. During this step, the ribosome changes from the pre-translocational (PRE) to the post-translocational (POST) state as the newly formed A-site-bound peptidyl-tRNA and P-site-bound deacylated tRNA move to the P and E sites, respectively. Catalyzes the coordinated movement of the two tRNA molecules, the mRNA and conformational changes in the ribosome. In Paraburkholderia xenovorans (strain LB400), this protein is Elongation factor G 1.